The following is a 491-amino-acid chain: UDP-N-acetylmuramate--L-alanine ligase (491 aa).

126-132 contacts ATP; the sequence is GTHGKTT.

It belongs to the MurCDEF family.

It is found in the cytoplasm. The enzyme catalyses UDP-N-acetyl-alpha-D-muramate + L-alanine + ATP = UDP-N-acetyl-alpha-D-muramoyl-L-alanine + ADP + phosphate + H(+). It participates in cell wall biogenesis; peptidoglycan biosynthesis. Its function is as follows. Cell wall formation. The chain is UDP-N-acetylmuramate--L-alanine ligase from Salmonella choleraesuis (strain SC-B67).